The primary structure comprises 431 residues: 3-isopropylmalate dehydratase large subunit (431 aa).

[4Fe-4S] cluster contacts are provided by C308, C368, and C371.

This sequence belongs to the aconitase/IPM isomerase family. LeuC type 2 subfamily. In terms of assembly, heterodimer of LeuC and LeuD. Requires [4Fe-4S] cluster as cofactor.

The enzyme catalyses (2R,3S)-3-isopropylmalate = (2S)-2-isopropylmalate. The protein operates within amino-acid biosynthesis; L-leucine biosynthesis; L-leucine from 3-methyl-2-oxobutanoate: step 2/4. Functionally, catalyzes the isomerization between 2-isopropylmalate and 3-isopropylmalate, via the formation of 2-isopropylmaleate. This chain is 3-isopropylmalate dehydratase large subunit, found in Desulfosudis oleivorans (strain DSM 6200 / JCM 39069 / Hxd3) (Desulfococcus oleovorans).